We begin with the raw amino-acid sequence, 597 residues long: MKKIRQPIIAVLGHVDHGKTSLLDRIRNTHVAEKEAGGITQHIGATEVPIDVVKQLAGPLLSLWKGEIKLPGLLFIDTPGHEAFTSLRARGGSLADLAILIIDVNEGFQPQTLESIEILRKYKTPFVVAANKIDRIKGWKVVENEPFLVNIKKQDQRAQQDLETKLWELIGKFYELGFQVNRFDRVKDFRKELAIIPISAKYGIGVPELLVLISGLAQKYLEEKLKIEVEGPARGTILEVREEIGFGTTIDVIIYDGTLRKDDTIVVGGKDKAIVTKIRALLKPKPLDEIRDPRYKFDHVNEVSASAGIKIAAPDLEEALAGSPVIAVRDEEELKRARREILEQIKSVIISTDKVGVIVKADTIGSLEALSKELHEKNIPIRKADVGNISKTDVMEALSVKEEEPFYGVVIGFNVKVNEDAEEVAKAKNIPLFVNNIIYKLIEDYEAWIKAEEEKKKKEILANTKFPGVIKLFPDERYVFRRSHPAIVGIEVLEGRIKPGYPLIKQNGDKVGVIKSIKSKEDFLQEAKKGDQVAVAIEGAIVGRHIHPGEILYVDISKDDAIRLVKELRDMLDDTDIEALKNTAKVKAQKDPFWGAL.

In terms of domain architecture, tr-type G spans 4 to 221 (IRQPIIAVLG…LISGLAQKYL (218 aa)). The G1 stretch occupies residues 13–20 (GHVDHGKT). 13–20 (GHVDHGKT) is a GTP binding site. The segment at 38–42 (GITQH) is G2. The segment at 77-80 (DTPG) is G3. Residues 77–81 (DTPGH) and 131–134 (NKID) each bind GTP. The G4 stretch occupies residues 131–134 (NKID). Residues 199 to 201 (SAK) are G5.

This sequence belongs to the TRAFAC class translation factor GTPase superfamily. Classic translation factor GTPase family. IF-2 subfamily.

Function in general translation initiation by promoting the binding of the formylmethionine-tRNA to ribosomes. Seems to function along with eIF-2. This chain is Probable translation initiation factor IF-2, found in Thermococcus sibiricus (strain DSM 12597 / MM 739).